The sequence spans 372 residues: N-methyl-L-tryptophan oxidase (372 aa).

4–34 (DLIIIGSGSVGAAAGYYATRAGLNVLMTDAH) provides a ligand contact to FAD. Cys308 carries the S-8alpha-FAD cysteine modification.

It belongs to the MSOX/MTOX family. MTOX subfamily. Monomer. It depends on FAD as a cofactor.

The catalysed reaction is N(alpha)-methyl-L-tryptophan + O2 + H2O = L-tryptophan + formaldehyde + H2O2. Catalyzes the oxidative demethylation of N-methyl-L-tryptophan. The polypeptide is N-methyl-L-tryptophan oxidase (Escherichia coli (strain K12 / DH10B)).